A 365-amino-acid chain; its full sequence is Aminomethyltransferase (365 aa).

Belongs to the GcvT family. In terms of assembly, the glycine cleavage system is composed of four proteins: P, T, L and H.

The catalysed reaction is N(6)-[(R)-S(8)-aminomethyldihydrolipoyl]-L-lysyl-[protein] + (6S)-5,6,7,8-tetrahydrofolate = N(6)-[(R)-dihydrolipoyl]-L-lysyl-[protein] + (6R)-5,10-methylene-5,6,7,8-tetrahydrofolate + NH4(+). The glycine cleavage system catalyzes the degradation of glycine. The polypeptide is Aminomethyltransferase (Chlorobaculum parvum (strain DSM 263 / NCIMB 8327) (Chlorobium vibrioforme subsp. thiosulfatophilum)).